A 252-amino-acid chain; its full sequence is NAC domain-containing protein 83 (252 aa).

Residues 14–160 (LPPGFRFHPT…NWVLCRIFLK (147 aa)) enclose the NAC domain. The DNA-binding element occupies 110–166 (VGLKKTLVFYKGKPPHGSRTDWIMHEYRLSSSPPSSMGPTQNWVLCRIFLKKRAGNK). 2 disordered regions span residues 165–194 (NKND…IITT) and 217–252 (LNLL…NSFR). Composition is skewed to low complexity over residues 180-194 (NNNN…IITT) and 219-252 (LLPS…NSFR). A PEST-like region spans residues 213-226 (RTTDLNLLPSSPSS).

In terms of assembly, interacts with NAC007/VND4, NAC026/VND5 and NAC030/VND7. Interacts with the mungbean yellow mosaic virus (MYMV) AC1 replication-associated protein. In terms of tissue distribution, expressed in xylem and phloem cells in roots and inflorescence stems. Highly expressed in senescent leaves. Expressed in roots, and abscission and dehiscence tissues, such as axils of bracts and abscission zones in cauline leaves and siliques.

It is found in the nucleus. Its function is as follows. Transcriptional repressor that negatively regulates the expression of genes involved in xylem vessel formation. Represses the transcriptional activation activity of NAC030/VND7, which regulates protoxylem vessel differentiation by promoting immature xylem vessel-specific genes expression. Transcriptional activator that regulates the COLD-REGULATED (COR15A and COR15B) and RESPONSIVE TO DEHYDRATION (LTI78/RD29A and LTI65/RD29B) genes by binding directly to their promoters. Mediates signaling crosstalk between salt stress response and leaf aging process. May play a role in DNA replication of mungbean yellow mosaic virus. This chain is NAC domain-containing protein 83, found in Arabidopsis thaliana (Mouse-ear cress).